The primary structure comprises 114 residues: uncharacterized protein (114 aa).

This is an uncharacterized protein from Human cytomegalovirus (strain AD169) (HHV-5).